Reading from the N-terminus, the 433-residue chain is Eukaryotic translation initiation factor 3 subunit E (433 aa).

The PCI domain occupies 217–390; it reads FFNHGKGRDL…GHVVMGTQPL (174 aa).

This sequence belongs to the eIF-3 subunit E family. Component of the eukaryotic translation initiation factor 3 (eIF-3) complex.

Its subcellular location is the cytoplasm. In terms of biological role, component of the eukaryotic translation initiation factor 3 (eIF-3) complex, which is involved in protein synthesis of a specialized repertoire of mRNAs and, together with other initiation factors, stimulates binding of mRNA and methionyl-tRNAi to the 40S ribosome. The eIF-3 complex specifically targets and initiates translation of a subset of mRNAs involved in cell proliferation. The polypeptide is Eukaryotic translation initiation factor 3 subunit E (eIF3-S6) (Anopheles gambiae (African malaria mosquito)).